A 323-amino-acid polypeptide reads, in one-letter code: o-succinylbenzoate synthase (323 aa).

K134 functions as the Proton donor in the catalytic mechanism. 3 residues coordinate Mg(2+): D162, E191, and D214. The active-site Proton acceptor is K236.

Belongs to the mandelate racemase/muconate lactonizing enzyme family. MenC type 1 subfamily. A divalent metal cation serves as cofactor.

The catalysed reaction is (1R,6R)-6-hydroxy-2-succinyl-cyclohexa-2,4-diene-1-carboxylate = 2-succinylbenzoate + H2O. Its pathway is quinol/quinone metabolism; 1,4-dihydroxy-2-naphthoate biosynthesis; 1,4-dihydroxy-2-naphthoate from chorismate: step 4/7. It functions in the pathway quinol/quinone metabolism; menaquinone biosynthesis. In terms of biological role, converts 2-succinyl-6-hydroxy-2,4-cyclohexadiene-1-carboxylate (SHCHC) to 2-succinylbenzoate (OSB). The protein is o-succinylbenzoate synthase of Pectobacterium atrosepticum (strain SCRI 1043 / ATCC BAA-672) (Erwinia carotovora subsp. atroseptica).